The primary structure comprises 122 residues: Large ribosomal subunit protein uL14 (122 aa).

Belongs to the universal ribosomal protein uL14 family. Part of the 50S ribosomal subunit. Forms a cluster with proteins L3 and L19. In the 70S ribosome, L14 and L19 interact and together make contacts with the 16S rRNA in bridges B5 and B8.

In terms of biological role, binds to 23S rRNA. Forms part of two intersubunit bridges in the 70S ribosome. The sequence is that of Large ribosomal subunit protein uL14 from Frankia alni (strain DSM 45986 / CECT 9034 / ACN14a).